A 189-amino-acid chain; its full sequence is Acireductone dioxygenase 1 (189 aa).

Fe(2+) is bound by residues histidine 102, histidine 104, glutamate 108, and histidine 146. 4 residues coordinate Ni(2+): histidine 102, histidine 104, glutamate 108, and histidine 146.

It belongs to the acireductone dioxygenase (ARD) family. As to quaternary structure, monomer. Fe(2+) is required as a cofactor. Ni(2+) serves as cofactor.

The enzyme catalyses 1,2-dihydroxy-5-(methylsulfanyl)pent-1-en-3-one + O2 = 3-(methylsulfanyl)propanoate + CO + formate + 2 H(+). It catalyses the reaction 1,2-dihydroxy-5-(methylsulfanyl)pent-1-en-3-one + O2 = 4-methylsulfanyl-2-oxobutanoate + formate + 2 H(+). The protein operates within amino-acid biosynthesis; L-methionine biosynthesis via salvage pathway; L-methionine from S-methyl-5-thio-alpha-D-ribose 1-phosphate: step 5/6. Functionally, catalyzes 2 different reactions between oxygen and the acireductone 1,2-dihydroxy-3-keto-5-methylthiopentene (DHK-MTPene) depending upon the metal bound in the active site. Fe-containing acireductone dioxygenase (Fe-ARD) produces formate and 2-keto-4-methylthiobutyrate (KMTB), the alpha-ketoacid precursor of methionine in the methionine recycle pathway. Ni-containing acireductone dioxygenase (Ni-ARD) produces methylthiopropionate, carbon monoxide and formate, and does not lie on the methionine recycle pathway. In Nocardia farcinica (strain IFM 10152), this protein is Acireductone dioxygenase 1.